A 350-amino-acid chain; its full sequence is Histidinol-phosphate aminotransferase (350 aa).

K207 bears the N6-(pyridoxal phosphate)lysine mark.

The protein belongs to the class-II pyridoxal-phosphate-dependent aminotransferase family. Histidinol-phosphate aminotransferase subfamily. As to quaternary structure, homodimer. It depends on pyridoxal 5'-phosphate as a cofactor.

The catalysed reaction is L-histidinol phosphate + 2-oxoglutarate = 3-(imidazol-4-yl)-2-oxopropyl phosphate + L-glutamate. It functions in the pathway amino-acid biosynthesis; L-histidine biosynthesis; L-histidine from 5-phospho-alpha-D-ribose 1-diphosphate: step 7/9. This chain is Histidinol-phosphate aminotransferase, found in Streptococcus thermophilus (strain ATCC BAA-491 / LMD-9).